Reading from the N-terminus, the 145-residue chain is Alpha-amylase/trypsin inhibitor CM2 (145 aa).

Residues 1 to 25 form the signal peptide; the sequence is MASKSSITHLLLAAVLVSVFAAAAA.

Belongs to the protease inhibitor I6 (cereal trypsin/alpha-amylase inhibitor) family. As to expression, developing endosperm.

Its subcellular location is the secreted. In terms of biological role, alpha-amylase/trypsin inhibitor. It could be involved in insect defense mechanisms. This chain is Alpha-amylase/trypsin inhibitor CM2, found in Triticum aestivum (Wheat).